A 343-amino-acid chain; its full sequence is Heme A synthase (343 aa).

8 consecutive transmembrane segments (helical) span residues 13-33 (VALW…VGGA), 96-116 (HRLL…FFLI), 130-150 (VLLG…SSGL), 165-185 (LGLA…AWAG), 197-217 (GWAL…ALVA), 258-278 (LHHR…GVAA), 290-310 (LTAF…IWTL), and 311-331 (MTAV…ILLA). Heme is bound at residue His260. Residue His322 coordinates heme.

This sequence belongs to the COX15/CtaA family. Type 2 subfamily. Interacts with CtaB. It depends on heme b as a cofactor.

It is found in the cell membrane. The enzyme catalyses Fe(II)-heme o + 2 A + H2O = Fe(II)-heme a + 2 AH2. The protein operates within porphyrin-containing compound metabolism; heme A biosynthesis; heme A from heme O: step 1/1. Catalyzes the conversion of heme O to heme A by two successive hydroxylations of the methyl group at C8. The first hydroxylation forms heme I, the second hydroxylation results in an unstable dihydroxymethyl group, which spontaneously dehydrates, resulting in the formyl group of heme A. The polypeptide is Heme A synthase (Caulobacter sp. (strain K31)).